We begin with the raw amino-acid sequence, 154 residues long: 3-hydroxyacyl-[acyl-carrier-protein] dehydratase FabZ (154 aa).

H60 is a catalytic residue.

It belongs to the thioester dehydratase family. FabZ subfamily.

It is found in the cytoplasm. It carries out the reaction a (3R)-hydroxyacyl-[ACP] = a (2E)-enoyl-[ACP] + H2O. In terms of biological role, involved in unsaturated fatty acids biosynthesis. Catalyzes the dehydration of short chain beta-hydroxyacyl-ACPs and long chain saturated and unsaturated beta-hydroxyacyl-ACPs. This chain is 3-hydroxyacyl-[acyl-carrier-protein] dehydratase FabZ, found in Actinobacillus pleuropneumoniae serotype 5b (strain L20).